The sequence spans 205 residues: Small ribosomal subunit protein uS4 (205 aa).

The segment at 21–47 is disordered; sequence GRPKSPFNKRDYGPGQHGQGRKGKPSD. Residues 94–154 enclose the S4 RNA-binding domain; it reads RRLDSVVYRA…DKSKQLAIID (61 aa).

Belongs to the universal ribosomal protein uS4 family. As to quaternary structure, part of the 30S ribosomal subunit. Contacts protein S5. The interaction surface between S4 and S5 is involved in control of translational fidelity.

Its function is as follows. One of the primary rRNA binding proteins, it binds directly to 16S rRNA where it nucleates assembly of the body of the 30S subunit. In terms of biological role, with S5 and S12 plays an important role in translational accuracy. This chain is Small ribosomal subunit protein uS4, found in Pelagibacter ubique (strain HTCC1062).